The following is a 658-amino-acid chain: Cysteine-rich receptor-like protein kinase 36 (658 aa).

A signal peptide spans 1-26 (MERSNLFHIPCFLLLFLLFNINGVHT). 2 Gnk2-homologous domains span residues 27 to 128 (TFVC…NIHR) and 139 to 246 (NVPH…DYRF). The Extracellular segment spans residues 27-281 (TFVCGDEDFS…KKGRMFQPWS (255 aa)). N-linked (GlcNAc...) asparagine glycosylation is found at N38, N64, N116, N150, and N163. Residues 282–302 (VVVVVFPTGINLAVFVAFVLA) traverse the membrane as a helical segment. Over 303–658 (YRRMRRRIYT…EVSITVLYPR (356 aa)) the chain is Cytoplasmic. Positions 340 to 612 (FSLENKLGQG…ITWLARDGTF (273 aa)) constitute a Protein kinase domain. ATP-binding positions include 346–354 (LGQGGFGSV) and K368. Phosphotyrosine is present on Y413. Catalysis depends on D465, which acts as the Proton acceptor. S469 is subject to Phosphoserine. T505 is subject to Phosphothreonine. Y513 carries the phosphotyrosine modification.

The protein belongs to the protein kinase superfamily. Ser/Thr protein kinase family. CRK subfamily. Interacts with CRK45. Post-translationally, autophosphorylated.

Its subcellular location is the cell membrane. The catalysed reaction is L-seryl-[protein] + ATP = O-phospho-L-seryl-[protein] + ADP + H(+). It carries out the reaction L-threonyl-[protein] + ATP = O-phospho-L-threonyl-[protein] + ADP + H(+). In terms of biological role, forms a complex with CRK45 that may negatively control abscisic acid (ABA) and osmotic stress signal transduction. Can phosphorylate CRK45 in vitro. In Arabidopsis thaliana (Mouse-ear cress), this protein is Cysteine-rich receptor-like protein kinase 36.